Consider the following 461-residue polypeptide: tRNA-2-methylthio-N(6)-dimethylallyladenosine synthase (461 aa).

Residues 18-134 enclose the MTTase N-terminal domain; it reads KHIYIQTLGC…LPDFISRIEK (117 aa). [4Fe-4S] cluster-binding residues include cysteine 27, cysteine 63, cysteine 97, cysteine 172, cysteine 176, and cysteine 179. Residues 158-388 form the Radical SAM core domain; that stretch reads CNGQVSSFVT…QALQEQHTLE (231 aa). The TRAM domain occupies 391–454; that stretch reads KAMEGKQEDV…LHSLRGEMLC (64 aa).

Belongs to the methylthiotransferase family. MiaB subfamily. In terms of assembly, monomer. [4Fe-4S] cluster serves as cofactor.

It localises to the cytoplasm. It catalyses the reaction N(6)-dimethylallyladenosine(37) in tRNA + (sulfur carrier)-SH + AH2 + 2 S-adenosyl-L-methionine = 2-methylsulfanyl-N(6)-dimethylallyladenosine(37) in tRNA + (sulfur carrier)-H + 5'-deoxyadenosine + L-methionine + A + S-adenosyl-L-homocysteine + 2 H(+). Catalyzes the methylthiolation of N6-(dimethylallyl)adenosine (i(6)A), leading to the formation of 2-methylthio-N6-(dimethylallyl)adenosine (ms(2)i(6)A) at position 37 in tRNAs that read codons beginning with uridine. In Syntrophus aciditrophicus (strain SB), this protein is tRNA-2-methylthio-N(6)-dimethylallyladenosine synthase.